The following is a 253-amino-acid chain: Chitooligosaccharide deacetylase (253 aa).

Positions 61 and 126 each coordinate Mg(2+).

This sequence belongs to the YdjC deacetylase family. ChbG subfamily. Homodimer. The cofactor is Mg(2+).

The protein resides in the cytoplasm. It carries out the reaction N,N'-diacetylchitobiose + H2O = N-acetyl-beta-D-glucosaminyl-(1-&gt;4)-D-glucosamine + acetate. The enzyme catalyses diacetylchitobiose-6'-phosphate + H2O = N'-monoacetylchitobiose-6'-phosphate + acetate. Its pathway is glycan degradation; chitin degradation. Involved in the degradation of chitin. ChbG is essential for growth on the acetylated chitooligosaccharides chitobiose and chitotriose but is dispensable for growth on cellobiose and chitosan dimer, the deacetylated form of chitobiose. Deacetylation of chitobiose-6-P and chitotriose-6-P is necessary for both the activation of the chb promoter by the regulatory protein ChbR and the hydrolysis of phosphorylated beta-glucosides by the phospho-beta-glucosidase ChbF. Catalyzes the removal of only one acetyl group from chitobiose-6-P to yield monoacetylchitobiose-6-P, the inducer of ChbR and the substrate of ChbF. The chain is Chitooligosaccharide deacetylase from Serratia marcescens.